We begin with the raw amino-acid sequence, 461 residues long: Bifunctional protein GlmU (461 aa).

Residues 1–229 (MEKYVVVLAA…FSESLGVNDR (229 aa)) are pyrophosphorylase. Residues 8–11 (LAAG), K22, Q72, and 77–78 (GT) each bind UDP-N-acetyl-alpha-D-glucosamine. D102 contacts Mg(2+). UDP-N-acetyl-alpha-D-glucosamine is bound by residues G139, E154, N169, and N227. N227 contacts Mg(2+). The linker stretch occupies residues 230 to 250 (IALAEATRIMQRRINEGHMRD). The tract at residues 251–461 (GVTFIDPATA…LPLSEDEEWK (211 aa)) is N-acetyltransferase. Residues R332 and K350 each coordinate UDP-N-acetyl-alpha-D-glucosamine. H362 acts as the Proton acceptor in catalysis. The UDP-N-acetyl-alpha-D-glucosamine site is built by Y365 and N376. Acetyl-CoA-binding residues include A422 and R439.

This sequence in the N-terminal section; belongs to the N-acetylglucosamine-1-phosphate uridyltransferase family. It in the C-terminal section; belongs to the transferase hexapeptide repeat family. Homotrimer. The cofactor is Mg(2+).

The protein localises to the cytoplasm. It carries out the reaction alpha-D-glucosamine 1-phosphate + acetyl-CoA = N-acetyl-alpha-D-glucosamine 1-phosphate + CoA + H(+). The catalysed reaction is N-acetyl-alpha-D-glucosamine 1-phosphate + UTP + H(+) = UDP-N-acetyl-alpha-D-glucosamine + diphosphate. Its pathway is nucleotide-sugar biosynthesis; UDP-N-acetyl-alpha-D-glucosamine biosynthesis; N-acetyl-alpha-D-glucosamine 1-phosphate from alpha-D-glucosamine 6-phosphate (route II): step 2/2. It functions in the pathway nucleotide-sugar biosynthesis; UDP-N-acetyl-alpha-D-glucosamine biosynthesis; UDP-N-acetyl-alpha-D-glucosamine from N-acetyl-alpha-D-glucosamine 1-phosphate: step 1/1. The protein operates within bacterial outer membrane biogenesis; LPS lipid A biosynthesis. In terms of biological role, catalyzes the last two sequential reactions in the de novo biosynthetic pathway for UDP-N-acetylglucosamine (UDP-GlcNAc). The C-terminal domain catalyzes the transfer of acetyl group from acetyl coenzyme A to glucosamine-1-phosphate (GlcN-1-P) to produce N-acetylglucosamine-1-phosphate (GlcNAc-1-P), which is converted into UDP-GlcNAc by the transfer of uridine 5-monophosphate (from uridine 5-triphosphate), a reaction catalyzed by the N-terminal domain. This chain is Bifunctional protein GlmU, found in Lactobacillus delbrueckii subsp. bulgaricus (strain ATCC 11842 / DSM 20081 / BCRC 10696 / JCM 1002 / NBRC 13953 / NCIMB 11778 / NCTC 12712 / WDCM 00102 / Lb 14).